Here is a 484-residue protein sequence, read N- to C-terminus: Bifunctional protein HldE (484 aa).

The segment at 1-320 (MDFSSITVLC…AELNAQDADA (320 aa)) is ribokinase. Residue 195-198 (NARE) coordinates ATP. Asp265 is an active-site residue. Residues 349-484 (FTNGCFDIIH…RIRAAGAADR (136 aa)) are cytidylyltransferase.

It in the N-terminal section; belongs to the carbohydrate kinase PfkB family. In the C-terminal section; belongs to the cytidylyltransferase family. Homodimer.

The enzyme catalyses D-glycero-beta-D-manno-heptose 7-phosphate + ATP = D-glycero-beta-D-manno-heptose 1,7-bisphosphate + ADP + H(+). The catalysed reaction is D-glycero-beta-D-manno-heptose 1-phosphate + ATP + H(+) = ADP-D-glycero-beta-D-manno-heptose + diphosphate. The protein operates within nucleotide-sugar biosynthesis; ADP-L-glycero-beta-D-manno-heptose biosynthesis; ADP-L-glycero-beta-D-manno-heptose from D-glycero-beta-D-manno-heptose 7-phosphate: step 1/4. Its pathway is nucleotide-sugar biosynthesis; ADP-L-glycero-beta-D-manno-heptose biosynthesis; ADP-L-glycero-beta-D-manno-heptose from D-glycero-beta-D-manno-heptose 7-phosphate: step 3/4. Functionally, catalyzes the phosphorylation of D-glycero-D-manno-heptose 7-phosphate at the C-1 position to selectively form D-glycero-beta-D-manno-heptose-1,7-bisphosphate. Its function is as follows. Catalyzes the ADP transfer from ATP to D-glycero-beta-D-manno-heptose 1-phosphate, yielding ADP-D-glycero-beta-D-manno-heptose. The sequence is that of Bifunctional protein HldE from Gluconacetobacter diazotrophicus (strain ATCC 49037 / DSM 5601 / CCUG 37298 / CIP 103539 / LMG 7603 / PAl5).